Reading from the N-terminus, the 338-residue chain is Sesquiterpene synthase 1 (338 aa).

The Mg(2+) site is built by Asp93, Asn228, Ser232, and Glu236. The DDXXD motif signature appears at 93–97 (DNISD). The short motif at 228–236 (NDIFSYNVE) is the NSE/DTE motif element. Positions 316 and 317 each coordinate (2E,6E)-farnesyl diphosphate.

Belongs to the terpene synthase family. The cofactor is Mg(2+).

It carries out the reaction (2E,6E)-farnesyl diphosphate = alpha-copaene + diphosphate. The enzyme catalyses (2E,6E)-farnesyl diphosphate = beta-copaene + diphosphate. It catalyses the reaction (2E,6E)-farnesyl diphosphate = alpha-muurolene + diphosphate. The catalysed reaction is (2E,6E)-farnesyl diphosphate = gamma-muurolene + diphosphate. It carries out the reaction (2E,6E)-farnesyl diphosphate = delta-cadinene + diphosphate. In terms of biological role, terpene cyclase that catalyzes the cyclization of farnesyl diphosphate (FPP) to various sesquiterpenes, including alpha-copaene, beta-copaene, beta-elemene, alpha-muurolene, gamma-muurolene and delta-cadinene. This is Sesquiterpene synthase 1 from Postia placenta (strain ATCC 44394 / Madison 698-R) (Brown rot fungus).